Here is a 330-residue protein sequence, read N- to C-terminus: MGSISMHITPSTALPIRHFRARVSCCSSGHVSFIKDVAATEPPMHLHHLLKVLQTRGETIISPGAKQGLIPLAIPLSKNSSGSVTALLRWPTAPPGMDMPVVEVWRSGVRLIARNVDEYIHRILVEEDAQELTELYRASGEAGEKLYEKGAFAESEIDNLDVYVLKKVGLFPDLLERKVLRHFDEGDHVSAMVTGEFYTKKDLFPGFGRPFVYYANILQKVGRNVEAKDAARVALRSPWWTLGCPYEEVASIAQWEDEQIEFIREKVSDEGRFEDLHKGKAPIQVALDVAAFLLDLASIEGTWSESLNHIAKCYEEAGLHHISNFVLYTD.

Residues 1–35 (MGSISMHITPSTALPIRHFRARVSCCSSGHVSFIK) constitute a chloroplast transit peptide.

Interacts with ATPC1.

It is found in the plastid. The protein localises to the chloroplast stroma. Functionally, involved in the assembly of the F(1) ATP synthase in chloroplast thylakoid membranes. Functions downstream of the CPN60 chaperones to promote assembly of the catalytically active core of the chloroplast ATP synthase. Assists the assembly of the ATP synthase gamma subunit into the active F(1) core downstream of CPN60-mediated folding, which is critical for the biogenesis of the chloroplast ATP synthase. The protein is Protein IN CHLOROPLAST ATPASE BIOGENESIS, chloroplastic of Arabidopsis thaliana (Mouse-ear cress).